The chain runs to 147 residues: 3-hydroxyacyl-[acyl-carrier-protein] dehydratase FabZ (147 aa).

Histidine 46 is a catalytic residue.

The protein belongs to the thioester dehydratase family. FabZ subfamily.

The protein resides in the cytoplasm. It carries out the reaction a (3R)-hydroxyacyl-[ACP] = a (2E)-enoyl-[ACP] + H2O. Its function is as follows. Involved in unsaturated fatty acids biosynthesis. Catalyzes the dehydration of short chain beta-hydroxyacyl-ACPs and long chain saturated and unsaturated beta-hydroxyacyl-ACPs. The polypeptide is 3-hydroxyacyl-[acyl-carrier-protein] dehydratase FabZ (Syntrophobacter fumaroxidans (strain DSM 10017 / MPOB)).